A 326-amino-acid polypeptide reads, in one-letter code: Endo-beta-1,4-glucanase A (326 aa).

The signal sequence occupies residues 1–19 (MRSLVLLSSVLALVAPSKG). E150 serves as the catalytic Proton donor. E257 acts as the Nucleophile in catalysis.

Belongs to the glycosyl hydrolase 5 (cellulase A) family.

It localises to the secreted. The catalysed reaction is Endohydrolysis of (1-&gt;4)-beta-D-glucosidic linkages in cellulose, lichenin and cereal beta-D-glucans.. Functionally, has endoglucanase activity on substrates containing beta-1,4 glycosidic bonds, like in carboxymethylcellulose (CMC), hydroxyethylcellulose (HEC) and beta-glucan. Involved in the degradation of complex natural cellulosic substrates. The sequence is that of Endo-beta-1,4-glucanase A (eglA) from Emericella nidulans (strain FGSC A4 / ATCC 38163 / CBS 112.46 / NRRL 194 / M139) (Aspergillus nidulans).